We begin with the raw amino-acid sequence, 367 residues long: Queuine tRNA-ribosyltransferase (367 aa).

D92 (proton acceptor) is an active-site residue. Residues 92–96 (DSGGF), D146, Q188, and G215 contribute to the substrate site. An RNA binding region spans residues 246-252 (GVGTPKD). D265 acts as the Nucleophile in catalysis. C303, C305, C308, and H334 together coordinate Zn(2+).

Belongs to the queuine tRNA-ribosyltransferase family. As to quaternary structure, homodimer. Within each dimer, one monomer is responsible for RNA recognition and catalysis, while the other monomer binds to the replacement base PreQ1. The cofactor is Zn(2+).

It catalyses the reaction 7-aminomethyl-7-carbaguanine + guanosine(34) in tRNA = 7-aminomethyl-7-carbaguanosine(34) in tRNA + guanine. The protein operates within tRNA modification; tRNA-queuosine biosynthesis. Catalyzes the base-exchange of a guanine (G) residue with the queuine precursor 7-aminomethyl-7-deazaguanine (PreQ1) at position 34 (anticodon wobble position) in tRNAs with GU(N) anticodons (tRNA-Asp, -Asn, -His and -Tyr). Catalysis occurs through a double-displacement mechanism. The nucleophile active site attacks the C1' of nucleotide 34 to detach the guanine base from the RNA, forming a covalent enzyme-RNA intermediate. The proton acceptor active site deprotonates the incoming PreQ1, allowing a nucleophilic attack on the C1' of the ribose to form the product. After dissociation, two additional enzymatic reactions on the tRNA convert PreQ1 to queuine (Q), resulting in the hypermodified nucleoside queuosine (7-(((4,5-cis-dihydroxy-2-cyclopenten-1-yl)amino)methyl)-7-deazaguanosine). This Francisella tularensis subsp. novicida (strain U112) protein is Queuine tRNA-ribosyltransferase.